The sequence spans 382 residues: Lipid-A-disaccharide synthase (382 aa).

Belongs to the LpxB family.

It carries out the reaction 2-N,3-O-bis[(3R)-3-hydroxytetradecanoyl]-alpha-D-glucosaminyl 1-phosphate + UDP-2-N,3-O-bis[(3R)-3-hydroxytetradecanoyl]-alpha-D-glucosamine = lipid A disaccharide (E. coli) + UDP + H(+). The enzyme catalyses a lipid X + a UDP-2-N,3-O-bis[(3R)-3-hydroxyacyl]-alpha-D-glucosamine = a lipid A disaccharide + UDP + H(+). Its pathway is glycolipid biosynthesis; lipid IV(A) biosynthesis; lipid IV(A) from (3R)-3-hydroxytetradecanoyl-[acyl-carrier-protein] and UDP-N-acetyl-alpha-D-glucosamine: step 5/6. Condensation of UDP-2,3-diacylglucosamine and 2,3-diacylglucosamine-1-phosphate to form lipid A disaccharide, a precursor of lipid A, a phosphorylated glycolipid that anchors the lipopolysaccharide to the outer membrane of the cell. The protein is Lipid-A-disaccharide synthase of Escherichia coli O17:K52:H18 (strain UMN026 / ExPEC).